The sequence spans 121 residues: Small ribosomal subunit protein uS13 (121 aa).

The segment at 89 to 121 (MRHRRGLPVRGQHTKNNARTRKGKKVSIAGRKK) is disordered.

The protein belongs to the universal ribosomal protein uS13 family. As to quaternary structure, part of the 30S ribosomal subunit. Forms a loose heterodimer with protein S19. Forms two bridges to the 50S subunit in the 70S ribosome.

In terms of biological role, located at the top of the head of the 30S subunit, it contacts several helices of the 16S rRNA. In the 70S ribosome it contacts the 23S rRNA (bridge B1a) and protein L5 of the 50S subunit (bridge B1b), connecting the 2 subunits; these bridges are implicated in subunit movement. Contacts the tRNAs in the A and P-sites. The protein is Small ribosomal subunit protein uS13 of Pediococcus pentosaceus (strain ATCC 25745 / CCUG 21536 / LMG 10740 / 183-1w).